We begin with the raw amino-acid sequence, 503 residues long: N-fatty-acyl-amino acid synthase/hydrolase PM20D1 (503 aa).

The N-terminal stretch at 1–24 is a signal peptide; the sequence is MAELLASLPAWAAVLLLFFATVSG. Residue Asn72 is glycosylated (N-linked (GlcNAc...) asparagine). His125 contributes to the Zn(2+) binding site. Asp127 is a catalytic residue. A Zn(2+)-binding site is contributed by Asp157. Residue Glu191 is the Proton acceptor of the active site. Positions 192 and 218 each coordinate Zn(2+). Asn443 carries an N-linked (GlcNAc...) asparagine glycan. His465 is a Zn(2+) binding site.

It belongs to the peptidase M20A family. Zn(2+) serves as cofactor. In terms of tissue distribution, in addition to being detected in blood (at protein level), PM20D1 is also highly expressed in other tissues including brown adipocytes, liver and kidney. It is also expressed in small intestine, large intestine, heart and pancreas.

It localises to the secreted. The catalysed reaction is an N-acyl-L-amino acid + H2O = an L-alpha-amino acid + a carboxylate. It catalyses the reaction an N-acyl-aromatic L-alpha-amino acid + H2O = an aromatic L-alpha-amino acid + a carboxylate. It carries out the reaction N-(5Z,8Z,11Z,14Z)-eicosatetraenoyl-glycine + H2O = (5Z,8Z,11Z,14Z)-eicosatetraenoate + glycine. The enzyme catalyses N-hexadecanoyl-L-phenylalanine + H2O = hexadecanoate + L-phenylalanine. The catalysed reaction is N-octadecanoyl-L-phenylalanine + H2O = octadecanoate + L-phenylalanine. It catalyses the reaction N-(4Z,7Z,10Z,13Z,16Z,19Z-docosahexaenoyl)-L-phenylalanine + H2O = (4Z,7Z,10Z,13Z,16Z,19Z)-docosahexaenoate + L-phenylalanine. It carries out the reaction N-(9Z-octadecenoyl)-L-asparagine + H2O = L-asparagine + (9Z)-octadecenoate. The enzyme catalyses (9Z)-octadecenoate + glycine = N-(9Z-octadecenoyl)glycine + H2O. The catalysed reaction is N-(9Z-octadecenoyl)-L-lysine + H2O = L-lysine + (9Z)-octadecenoate. It catalyses the reaction N-(9Z-octadecenoyl)-L-methionine + H2O = (9Z)-octadecenoate + L-methionine. It carries out the reaction N-(9Z-octadecenoyl)-L-serine + H2O = L-serine + (9Z)-octadecenoate. The enzyme catalyses N-(9Z-octadecenoyl)-L-tryptophan + H2O = L-tryptophan + (9Z)-octadecenoate. The catalysed reaction is N-(9Z-octadecenoyl)-L-tyrosine + H2O = L-tyrosine + (9Z)-octadecenoate. It catalyses the reaction N-(9Z-octadecenoyl)-L-glutamine + H2O = L-glutamine + (9Z)-octadecenoate. It carries out the reaction N-(5Z,8Z,11Z,14Z-eicosatetraenoyl)-L-serine + H2O = (5Z,8Z,11Z,14Z)-eicosatetraenoate + L-serine. The enzyme catalyses (5Z,8Z,11Z,14Z)-eicosatetraenoate + L-phenylalanine = N-(5Z,8Z,11Z,14Z-eicosatetraenoyl)-L-phenylalanine + H2O. The catalysed reaction is N-(9Z-octadecenoyl)-L-leucine + H2O = L-leucine + (9Z)-octadecenoate. It catalyses the reaction L-phenylalanine + (9Z)-octadecenoate = N-(9Z-octadecenoyl)-L-phenylalanine + H2O. It participates in amino-acid metabolism. It functions in the pathway energy metabolism; electron transfer. Its pathway is lipid metabolism; fatty acid metabolism. Lipoproteins are powerful coactivators of PM20D1 activity in vitro and NAA biosynthesis in vivo. Functionally, secreted enzyme that regulates the endogenous N-fatty acyl amino acid (NAAs) tissue and circulating levels by functioning as a bidirectional NAA synthase/hydrolase. It condenses free fatty acids and free amino acids to generate NAAs and bidirectionally catalyzes the reverse hydrolysis reaction. Some of these NAAs stimulate oxidative metabolism via mitochondrial uncoupling, increasing energy expenditure in a UPC1-independent manner. Thereby, this secreted protein may indirectly regulate whole body energy expenditure. PM20D1 circulates in tight association with both low- and high-density (LDL and HDL,respectively) lipoprotein particles. This is N-fatty-acyl-amino acid synthase/hydrolase PM20D1 from Mus musculus (Mouse).